A 279-amino-acid chain; its full sequence is Large ribosomal subunit protein uL2 (279 aa).

2 disordered regions span residues 1–59 and 224–279; these read MGIR…GGHK and VAMN…KNKR. 2 stretches are compositionally biased toward basic residues: residues 50 to 59 and 269 to 279; these read TTRHKGGGHK and VRRRRTGKNKR.

It belongs to the universal ribosomal protein uL2 family. As to quaternary structure, part of the 50S ribosomal subunit. Forms a bridge to the 30S subunit in the 70S ribosome.

Functionally, one of the primary rRNA binding proteins. Required for association of the 30S and 50S subunits to form the 70S ribosome, for tRNA binding and peptide bond formation. It has been suggested to have peptidyltransferase activity; this is somewhat controversial. Makes several contacts with the 16S rRNA in the 70S ribosome. The chain is Large ribosomal subunit protein uL2 from Arthrobacter sp. (strain FB24).